A 280-amino-acid chain; its full sequence is Thiamine-phosphate synthase (280 aa).

The segment at 1 to 64 (MGWSGSPLTL…ATGRGGLRMT (64 aa)) is disordered. Positions 42 to 55 (GRGELRSRERRGEA) are enriched in basic and acidic residues. 4-amino-2-methyl-5-(diphosphooxymethyl)pyrimidine contacts are provided by residues 104–108 (QLRCK) and Asn-141. 2 residues coordinate Mg(2+): Asp-142 and Asp-161. Residue Ser-179 coordinates 4-amino-2-methyl-5-(diphosphooxymethyl)pyrimidine. 205 to 207 (TPT) provides a ligand contact to 2-[(2R,5Z)-2-carboxy-4-methylthiazol-5(2H)-ylidene]ethyl phosphate. Position 208 (Lys-208) interacts with 4-amino-2-methyl-5-(diphosphooxymethyl)pyrimidine. Gly-236 serves as a coordination point for 2-[(2R,5Z)-2-carboxy-4-methylthiazol-5(2H)-ylidene]ethyl phosphate.

The protein belongs to the thiamine-phosphate synthase family. Mg(2+) is required as a cofactor.

It carries out the reaction 2-[(2R,5Z)-2-carboxy-4-methylthiazol-5(2H)-ylidene]ethyl phosphate + 4-amino-2-methyl-5-(diphosphooxymethyl)pyrimidine + 2 H(+) = thiamine phosphate + CO2 + diphosphate. The enzyme catalyses 2-(2-carboxy-4-methylthiazol-5-yl)ethyl phosphate + 4-amino-2-methyl-5-(diphosphooxymethyl)pyrimidine + 2 H(+) = thiamine phosphate + CO2 + diphosphate. It catalyses the reaction 4-methyl-5-(2-phosphooxyethyl)-thiazole + 4-amino-2-methyl-5-(diphosphooxymethyl)pyrimidine + H(+) = thiamine phosphate + diphosphate. It participates in cofactor biosynthesis; thiamine diphosphate biosynthesis; thiamine phosphate from 4-amino-2-methyl-5-diphosphomethylpyrimidine and 4-methyl-5-(2-phosphoethyl)-thiazole: step 1/1. Condenses 4-methyl-5-(beta-hydroxyethyl)thiazole monophosphate (THZ-P) and 2-methyl-4-amino-5-hydroxymethyl pyrimidine pyrophosphate (HMP-PP) to form thiamine monophosphate (TMP). This Deinococcus radiodurans (strain ATCC 13939 / DSM 20539 / JCM 16871 / CCUG 27074 / LMG 4051 / NBRC 15346 / NCIMB 9279 / VKM B-1422 / R1) protein is Thiamine-phosphate synthase.